The primary structure comprises 288 residues: Bifunctional protein FolD (288 aa).

NADP(+)-binding positions include 166–168 (GAS) and isoleucine 232.

This sequence belongs to the tetrahydrofolate dehydrogenase/cyclohydrolase family. In terms of assembly, homodimer.

The enzyme catalyses (6R)-5,10-methylene-5,6,7,8-tetrahydrofolate + NADP(+) = (6R)-5,10-methenyltetrahydrofolate + NADPH. It catalyses the reaction (6R)-5,10-methenyltetrahydrofolate + H2O = (6R)-10-formyltetrahydrofolate + H(+). It participates in one-carbon metabolism; tetrahydrofolate interconversion. Functionally, catalyzes the oxidation of 5,10-methylenetetrahydrofolate to 5,10-methenyltetrahydrofolate and then the hydrolysis of 5,10-methenyltetrahydrofolate to 10-formyltetrahydrofolate. In Citrobacter koseri (strain ATCC BAA-895 / CDC 4225-83 / SGSC4696), this protein is Bifunctional protein FolD.